Reading from the N-terminus, the 389-residue chain is Chalcone synthase 1 (389 aa).

Cys-164 is a catalytic residue.

The protein belongs to the thiolase-like superfamily. Chalcone/stilbene synthases family.

It carries out the reaction (E)-4-coumaroyl-CoA + 3 malonyl-CoA + 3 H(+) = 2',4,4',6'-tetrahydroxychalcone + 3 CO2 + 4 CoA. It functions in the pathway secondary metabolite biosynthesis; flavonoid biosynthesis. In terms of biological role, the primary product of this enzyme is 4,2',4',6'-tetrahydroxychalcone (also termed naringenin-chalcone or chalcone) which can under specific conditions spontaneously isomerize into naringenin. In Pisum sativum (Garden pea), this protein is Chalcone synthase 1 (CHS1).